The following is a 509-amino-acid chain: Putative aldehyde dehydrogenase family 7 member A1 homolog (509 aa).

244–249 serves as a coordination point for NAD(+); the sequence is GSTEVG. The Proton acceptor role is filled by Glu-266. Catalysis depends on Cys-300, which acts as the Nucleophile.

This sequence belongs to the aldehyde dehydrogenase family. In terms of assembly, homotetramer.

It carries out the reaction an aldehyde + NAD(+) + H2O = a carboxylate + NADH + 2 H(+). This chain is Putative aldehyde dehydrogenase family 7 member A1 homolog, found in Dictyostelium discoideum (Social amoeba).